The sequence spans 459 residues: N-chimaerin (459 aa).

Alanine 2 carries the post-translational modification N-acetylalanine. Positions 49–135 (EYHGMISREE…IETKAAEYIA (87 aa)) constitute an SH2 domain. The residue at position 192 (threonine 192) is a Phosphothreonine. The Phorbol-ester/DAG-type zinc finger occupies 205 to 255 (VHNFKVHTFRGPHWCEYCANFMWGLIAQGVKCADCGLNVHKQCSKMVPNDC). One can recognise a Rho-GAP domain in the interval 268–459 (CDLTTLVKAH…LLIKNEDILF (192 aa)). Threonine 340 carries the post-translational modification Phosphothreonine.

As to quaternary structure, interacts with EPHA4; effector of EPHA4 in axon guidance linking EPHA4 activation to RAC1 regulation. May also interact with EPHB1 and EPHB2. Post-translationally, phosphorylated. Phosphorylation is EPHA4 kinase activity-dependent.

GTPase-activating protein for p21-rac and a phorbol ester receptor. May play an important role in neuronal signal-transduction mechanisms. Involved in the assembly of neuronal locomotor circuits as a direct effector of EPHA4 in axon guidance. The polypeptide is N-chimaerin (Chn1) (Mus musculus (Mouse)).